A 388-amino-acid chain; its full sequence is Transcriptional regulatory protein EmbR (388 aa).

A DNA-binding region (ompR/PhoB-type) is located at residues 2–105 (AGSATVEKRL…AAPPGYRLSI (104 aa)). The 50-residue stretch at 308–357 (TRIGRLHDNDIVLDSANVSRHHAVIVDTGTNYVINDLRSSNGVHVQHERI) folds into the FHA domain.

It belongs to the AfsR/DnrI/RedD regulatory family. Post-translationally, phosphorylated on threonine residue(s).

In terms of biological role, positively regulates the transcription of the embCAB operon. Exhibits ATPase and GTPase activities. In Mycobacterium bovis (strain ATCC BAA-935 / AF2122/97), this protein is Transcriptional regulatory protein EmbR (embR).